A 518-amino-acid chain; its full sequence is MPTVVVMDVSLSMTRPVPVEGTEEFQRKHLAVHGLTMLFEHMATNYKLEFTAMVVFSSLWELMVPFTRDYNTLQEALSNIDDYDKTCLESALQGVSSVVQQEWGASIPSQIVLVTDGCLGIGKGSLQHSLATLNQRNDSNRFPLPFSFPSKLYIMCMANLEELQGSDSLEYLERLIDLNNGEGQIFTIDGPLCLKNVQSMFGKLIDVAYTPFHAVLKCGNLSSDVQVFPRPEPVITDEEIDPLPKTINTDLEVVGFIDIADISSPPVLSRHLVLPIALNKEGDEVGTGLADDMEDENSANQIAGKIPNFCVLLHGSLKVEGMVALVQLGPDWHGMLYSQADSKKKSNLMMSLFEPGLEPLPWLGKTMQLGPITDAKENPYGEEDNKSPFPLQPKNKRSYAQNVTVWIKPSGLQTDVQKILRNARKLPEKTQTFYKELNRLRKAALAFGFLDLLKGVSDMLERECTLLPDTAHPDAAFQLSHAAAQLKLASTGGSEHGAYDHNIVPLQTDFSGRNSDRI.

The VWFA domain occupies 2 to 204; that stretch reads PTVVVMDVSL…KNVQSMFGKL (203 aa). Residues Ser10, Ser12, and Thr86 each contribute to the Mg(2+) site.

Belongs to the Integrator subunit 14 family. As to quaternary structure, component of the Integrator complex, composed of core subunits INTS1, INTS2, INTS3, INTS4, INTS5, INTS6, INTS7, INTS8, INTS9/RC74, INTS10, INTS11/CPSF3L, INTS12, INTS13, INTS14 and INTS15. The core complex associates with protein phosphatase 2A subunits PPP2CA and PPP2R1A, to form the Integrator-PP2A (INTAC) complex. INTS14 is part of the tail subcomplex, composed of INTS10, INTS13, INTS14 and INTS15.

It is found in the nucleus. Component of the integrator complex, a multiprotein complex that terminates RNA polymerase II (Pol II) transcription in the promoter-proximal region of genes. The integrator complex provides a quality checkpoint during transcription elongation by driving premature transcription termination of transcripts that are unfavorably configured for transcriptional elongation: the complex terminates transcription by (1) catalyzing dephosphorylation of the C-terminal domain (CTD) of Pol II subunit POLR2A/RPB1 and SUPT5H/SPT5, (2) degrading the exiting nascent RNA transcript via endonuclease activity and (3) promoting the release of Pol II from bound DNA. The integrator complex is also involved in terminating the synthesis of non-coding Pol II transcripts, such as enhancer RNAs (eRNAs), small nuclear RNAs (snRNAs), telomerase RNAs and long non-coding RNAs (lncRNAs). Within the integrator complex, INTS14 is part of the integrator tail module that acts as a platform for the recruitment of transcription factors at promoters. This chain is Integrator complex subunit 14, found in Xenopus tropicalis (Western clawed frog).